Here is an 898-residue protein sequence, read N- to C-terminus: Cip1-interacting zinc finger protein (898 aa).

Disordered stretches follow at residues 48–69 (QAPL…QPLL), 157–305 (QSLL…ALEA), and 318–471 (VQAQ…QPQV). A compositionally biased stretch (polar residues) spans 170 to 203 (NPSQFNLSGRNPQKQARTSSSTTPNRKDSSSQTM). S209 carries the phosphoserine modification. Residue T244 is modified to Phosphothreonine. A compositionally biased stretch (basic and acidic residues) spans 263–273 (RSSEEPTEKEP). K280 is covalently cross-linked (Glycyl lysine isopeptide (Lys-Gly) (interchain with G-Cter in SUMO2)). Positions 318–327 (VQAQVQSQTQ) are enriched in low complexity. A compositionally biased stretch (polar residues) spans 328–351 (PRIPSTDTQVQPKLQKQAQTQTSP). A Glycyl lysine isopeptide (Lys-Gly) (interchain with G-Cter in SUMO2) cross-link involves residue K340. S350 bears the Phosphoserine mark. The span at 355–383 (VLQQKQVQPQLQQEAEPQKQVQPQVQPQA) shows a compositional bias: low complexity. A compositionally biased stretch (polar residues) spans 384-395 (HSQGPRQVQLQQ). K401 participates in a covalent cross-link: Glycyl lysine isopeptide (Lys-Gly) (interchain with G-Cter in SUMO2). Residues 402 to 435 (QVQPQVQPQAHSQPPRQVQLQLQKQVQTQTYPQV) are compositionally biased toward low complexity. Residues 436–445 (HTQAQPSVQP) show a composition bias toward polar residues. A Phosphoserine modification is found at S547. A Glycyl lysine isopeptide (Lys-Gly) (interchain with G-Cter in SUMO2) cross-link involves residue K549. A disordered region spans residues 562 to 584 (STVPLTPVPRPSDSVSSTPAATS). T567 is subject to Phosphothreonine. The segment covering 572–584 (PSDSVSSTPAATS) has biased composition (low complexity). Glycyl lysine isopeptide (Lys-Gly) (interchain with G-Cter in SUMO2) cross-links involve residues K588, K680, and K705. The Matrin-type zinc finger occupies 799–830 (YICRICHKFYHSNSGAQLSHCKSLGHFENLQK). S821 carries the phosphoserine modification. Residue K830 forms a Glycyl lysine isopeptide (Lys-Gly) (interchain with G-Cter in SUMO2) linkage. At S838 the chain carries Phosphoserine. Residues 859–879 (LFTSSGRPPSQPNTQDKTPSK) show a composition bias toward polar residues. The interval 859-898 (LFTSSGRPPSQPNTQDKTPSKVTARPSQPPLPRRSTRLKT) is disordered. A Glycyl lysine isopeptide (Lys-Gly) (interchain with G-Cter in SUMO2) cross-link involves residue K879.

Interacts with CIP/WAF1.

Its subcellular location is the nucleus. May regulate the subcellular localization of CIP/WAF1. The sequence is that of Cip1-interacting zinc finger protein (CIZ1) from Homo sapiens (Human).